The chain runs to 73 residues: Conotoxin Cl9.2 (73 aa).

The first 18 residues, 1–18 (MSKLVILAVLVLLPLVTA), serve as a signal peptide directing secretion. Residues 19–41 (EHGRDEQAMQPEKKTMWTLWSLT) constitute a propeptide that is removed on maturation. 3 cysteine pairs are disulfide-bonded: cysteine 46–cysteine 61, cysteine 52–cysteine 63, and cysteine 58–cysteine 72.

As to expression, expressed by the venom duct.

The protein localises to the secreted. This chain is Conotoxin Cl9.2, found in Californiconus californicus (California cone).